A 156-amino-acid polypeptide reads, in one-letter code: Small ribosomal subunit protein uS7 (156 aa).

It belongs to the universal ribosomal protein uS7 family. Part of the 30S ribosomal subunit. Contacts proteins S9 and S11.

In terms of biological role, one of the primary rRNA binding proteins, it binds directly to 16S rRNA where it nucleates assembly of the head domain of the 30S subunit. Is located at the subunit interface close to the decoding center, probably blocks exit of the E-site tRNA. In Klebsiella pneumoniae subsp. pneumoniae (strain ATCC 700721 / MGH 78578), this protein is Small ribosomal subunit protein uS7.